The sequence spans 1288 residues: Contactin-associated protein-like 3B (1288 aa).

An N-terminal signal peptide occupies residues 1-25; it reads MASVAWAVLKVLLLLPTQTWSPVGA. The disordered stretch occupies residues 23-61; the sequence is VGAGNPPDCDSPLASALPRSSFSSSSELSSSHGPGFSRL. Residues 26-1245 lie on the Extracellular side of the membrane; sequence GNPPDCDSPL…LVNADRRDSA (1220 aa). An F5/8 type C domain is found at 31–177; the sequence is CDSPLASALP…IGMRIEVYGC (147 aa). 6 cysteine pairs are disulfide-bonded: C31-C177, C332-C364, C513-C545, C551-C562, C556-C571, and C573-C583. Residues 33 to 59 show a composition bias toward low complexity; it reads SPLASALPRSSFSSSSELSSSHGPGFS. 2 Laminin G-like domains span residues 183–364 and 370–545; these read VVYF…SFSC and VPVT…IDSC. An N-linked (GlcNAc...) asparagine glycan is attached at N359. In terms of domain architecture, EGF-like 1 spans 547-584; that stretch reads ITDRCLPSYCEHGGECSQSWDTFSCDCLGTGYTGETCH. One can recognise a Fibrinogen C-terminal domain in the interval 585 to 792; that stretch reads SSLYEQSCEA…LLCRGDKSFW (208 aa). N-linked (GlcNAc...) asparagine glycosylation occurs at N706. In terms of domain architecture, Laminin G-like 3 spans 793–958; the sequence is NSASFNTETS…TVTPGVEPGC (166 aa). 5 cysteine pairs are disulfide-bonded: C931-C958, C962-C975, C969-C984, C986-C996, and C1167-C1203. The region spanning 959 to 997 is the EGF-like 2 domain; it reads AGHCSTYGHLCRNGGRCREKRRGVTCDCAFSAYDGPFCS. One can recognise a Laminin G-like 4 domain in the interval 1016 to 1203; that stretch reads EHYTLSENSS…RGHVAPMARC (188 aa). Residues 1215-1236 are disordered; it reads ELAPRLAGGAGRSGPVDEGEPL. The chain crosses the membrane as a helical span at residues 1246-1266; the sequence is VIGGVIAVEIFILLCITAIAI. The Cytoplasmic segment spans residues 1267-1288; sequence RIYQQRKLRKENESKVSKKEEC.

It belongs to the neurexin family.

It is found in the membrane. The polypeptide is Contactin-associated protein-like 3B (CNTNAP3B) (Homo sapiens (Human)).